We begin with the raw amino-acid sequence, 398 residues long: Acetylornithine aminotransferase (398 aa).

Pyridoxal 5'-phosphate-binding positions include 105 to 106 and phenylalanine 138; that span reads GA. Residue arginine 141 participates in N(2)-acetyl-L-ornithine binding. 223–226 is a binding site for pyridoxal 5'-phosphate; sequence DEVQ. Lysine 252 bears the N6-(pyridoxal phosphate)lysine mark. Residue threonine 280 coordinates N(2)-acetyl-L-ornithine. Residue threonine 281 coordinates pyridoxal 5'-phosphate.

Belongs to the class-III pyridoxal-phosphate-dependent aminotransferase family. ArgD subfamily. As to quaternary structure, homodimer. Pyridoxal 5'-phosphate serves as cofactor.

Its subcellular location is the cytoplasm. The catalysed reaction is N(2)-acetyl-L-ornithine + 2-oxoglutarate = N-acetyl-L-glutamate 5-semialdehyde + L-glutamate. Its pathway is amino-acid biosynthesis; L-arginine biosynthesis; N(2)-acetyl-L-ornithine from L-glutamate: step 4/4. The polypeptide is Acetylornithine aminotransferase (Methanocaldococcus jannaschii (strain ATCC 43067 / DSM 2661 / JAL-1 / JCM 10045 / NBRC 100440) (Methanococcus jannaschii)).